The following is a 365-amino-acid chain: MLAIGLMSGTSLDGVDVALIETNGEKQVKPLNFASYPYSDTDKACLREACRRALTMAAPCFIPEDEVIYQAEHIVTLRHIQAVKDFLKKNALGNQAIKVIGFHGQTIAHRPDLGWTWQIGDGAALAQATKISVVDDFRSHDVQAGGEGAPLLPIYHWALFSEASHPLAVLNLGGIANITWIGADENDLIACDTGPANGMIDDWVKAKTGLDYDESGLIASKGVVHHDLVDAMMSQKFFSQLPPKSLDRSDFSIEAVANLSIEDGAATLTAFTAESVARSLSFFPERPSKIIVAGGGRHNVTMMKMLHDSLKMPVQPIEDFHLNGDATEAEGFAYLAVRRVFNKPISFPKTTGVPHPMTGGRIHYI.

9–16 (GTSLDGVD) serves as a coordination point for ATP.

Belongs to the anhydro-N-acetylmuramic acid kinase family.

It carries out the reaction 1,6-anhydro-N-acetyl-beta-muramate + ATP + H2O = N-acetyl-D-muramate 6-phosphate + ADP + H(+). Its pathway is amino-sugar metabolism; 1,6-anhydro-N-acetylmuramate degradation. The protein operates within cell wall biogenesis; peptidoglycan recycling. Its function is as follows. Catalyzes the specific phosphorylation of 1,6-anhydro-N-acetylmuramic acid (anhMurNAc) with the simultaneous cleavage of the 1,6-anhydro ring, generating MurNAc-6-P. Is required for the utilization of anhMurNAc either imported from the medium or derived from its own cell wall murein, and thus plays a role in cell wall recycling. This is Anhydro-N-acetylmuramic acid kinase from Zymomonas mobilis subsp. mobilis (strain ATCC 31821 / ZM4 / CP4).